A 132-amino-acid chain; its full sequence is Small ribosomal subunit protein uS11 (132 aa).

Belongs to the universal ribosomal protein uS11 family. As to quaternary structure, part of the 30S ribosomal subunit. Interacts with proteins S7 and S18. Binds to IF-3.

In terms of biological role, located on the platform of the 30S subunit, it bridges several disparate RNA helices of the 16S rRNA. Forms part of the Shine-Dalgarno cleft in the 70S ribosome. The polypeptide is Small ribosomal subunit protein uS11 (Leifsonia xyli subsp. xyli (strain CTCB07)).